We begin with the raw amino-acid sequence, 493 residues long: MSELTALTIAEARDKLKAKAITATELTDAYLSAIDAANDAINAYVAVTHDQARSMAKASDERIAKGEAGALEGIPLGVKDLFATKGVHTQACSHILDGFKPEYESTVTANLWADGAVMLGKLNMDEVAMGSSNETSYYGPVKNPWRAKGSNADLVPGGSSGGSAAAVAAHLCAGATATDTGGSIRQPAAFTGTVGIKPTYGRVSRWGTVAFASSLDQAGPIARDVRDAAILMKSMASLDLKDTTSVDLPVPDYEAALGRSVKGMKIGIPREYRVDGMPGEIEELWQKGIQYLKDAGAEIVDISLPHTKYALPAYYIVAPAEASSNLARYDGVRYGLRVPGKDIADMYEQTRAAGFGKEVKRRIMIGTYVLSAGYYDAYYLRAQKVRTLIKKDFEDVFAKGVDAILTPATPSAAFGLADEVLANDPVKMYLNDIFTVTVNMAGLPGIAVPAGLNGQGLPLGLQLIGRPFEEETLFQAAHVIEQAAGRFTPAKWW.

Residues Lys-79 and Ser-159 each act as charge relay system in the active site. The active-site Acyl-ester intermediate is Ser-183.

Belongs to the amidase family. GatA subfamily. Heterotrimer of A, B and C subunits.

The catalysed reaction is L-glutamyl-tRNA(Gln) + L-glutamine + ATP + H2O = L-glutaminyl-tRNA(Gln) + L-glutamate + ADP + phosphate + H(+). Its function is as follows. Allows the formation of correctly charged Gln-tRNA(Gln) through the transamidation of misacylated Glu-tRNA(Gln) in organisms which lack glutaminyl-tRNA synthetase. The reaction takes place in the presence of glutamine and ATP through an activated gamma-phospho-Glu-tRNA(Gln). This is Glutamyl-tRNA(Gln) amidotransferase subunit A from Brucella abortus (strain S19).